The sequence spans 78 residues: Small ribosomal subunit protein uS17 (78 aa).

Belongs to the universal ribosomal protein uS17 family. As to quaternary structure, part of the 30S ribosomal subunit.

One of the primary rRNA binding proteins, it binds specifically to the 5'-end of 16S ribosomal RNA. This chain is Small ribosomal subunit protein uS17, found in Sinorhizobium fredii (strain NBRC 101917 / NGR234).